A 224-amino-acid polypeptide reads, in one-letter code: PKHD-type hydroxylase Shewana3_0717 (224 aa).

The 99-residue stretch at 78-176 (QFYPPLFNRY…RTAAFMWLQS (99 aa)) folds into the Fe2OG dioxygenase domain. Positions 96, 98, and 157 each coordinate Fe cation. R167 contributes to the 2-oxoglutarate binding site.

Requires Fe(2+) as cofactor. L-ascorbate serves as cofactor.

In Shewanella sp. (strain ANA-3), this protein is PKHD-type hydroxylase Shewana3_0717.